Here is a 470-residue protein sequence, read N- to C-terminus: UTP--glucose-1-phosphate uridylyltransferase 1 (470 aa).

Position 2 is an N-acetylalanine (Ala2). Residues 86–89 (LNGG), Lys100, Gln163, and Gly192 each bind UTP. Residue 88 to 89 (GG) coordinates substrate. Substrate-binding positions include His193 and 221–223 (NSD). Residues Asp223 and Lys361 each contribute to the UTP site.

The protein belongs to the UDPGP type 1 family. As to expression, expressed in roots, rosette leaves, cauline leaves, stems, flowers and siliques.

The protein resides in the cytoplasm. It carries out the reaction alpha-D-glucose 1-phosphate + UTP + H(+) = UDP-alpha-D-glucose + diphosphate. Its function is as follows. Converts glucose 1-phosphate to UDP-glucose, which is the major glycosyl donor for polysaccharides. Acts redundantly with UGP2 and is essential for the synthesis of sucrose, starch and cell wall, and callose deposition. Involved in the regulation of the programmed cell death (PCD) induced by the fungal toxin fumonisin B1 (FB1). The polypeptide is UTP--glucose-1-phosphate uridylyltransferase 1 (Arabidopsis thaliana (Mouse-ear cress)).